A 1026-amino-acid polypeptide reads, in one-letter code: MSGFALFINRPVATSLLALAITLVGLLGLRLLPVAPLPQVDFPVIMVSASLPGASAETMAASVAMPLERALGRIAGVNEMTSSSSLGTTRIILQFNLDRNIDGAARDVQAALNAAQSLLPSGMPSRPSYRKANPSDAPIAILTLTSAQYSQGDLYDLASTRLAQKIAQINGVGDVSVSGSSLPAVRIDLNPDALFNQGTSLDTVRQAIASANVRRPLGAVADDGRRWQVQSNDALMTAQEYRPLIIRYRDGAPLRLQDVARISDGVEDVRNAGMSNGQPAILIMIRRSADANIIETVDRLRSDLPALQALLPGGVSLDIAQDRTPTIRASLREVEQSLAIAIALVILVVFLFLRSARATLIPAVTVPVSLIGTCAAIYLCGFSLNNLSLMALTIASGFVVDDAIVVLENIARHIEDGLSPHRAALAGVREVGFTVFSISLSLAAVFIPLLFMGGIPGRLFHEFAITLSASIAISLLIALTLTPMMCARLLRPRHTDGGMRPTALRRLSALLQRGYALSLNWTLDHARWVLLTLLAVIGLNIWLYISIPKTFFPQQDTGRLMGFIQADQSISFQAMRGKLQDFMHIVRADPDVDNVTGFTGGTRVNSGMMFIALKPLGERKQDAQQVIARLRTRLSHEPGANLFLMAVQDIRAGGRQGNASYQYTLLSDDLAVLRHWEPQVRKALAALPQLTDVSTDQQDKGTEMLLTYDRPAMARLGIKVSEVNTLLSNAFGQRQISTLYQPLNQYHVVMEVDPRYAQDERALDKMFIINQAGQPIPLSGFASWLPANAPLSVNHQGLSAAATISFNLPPGGSLSDASDAIAHAMTALGTPPSLRGTFAGTALLFQQAQSSQLLLILAAIATVYIVLGILYESYIHPLTILSTLPSAGVGALLALMLFNAPFSLIALIGIMLLIGLVKKNAILLVDFALTAEREQHLSARDAIYQACLLRFRPILMTTLAALFGALPLAFSYGDGAELRQPLGITIVGGLLVSQILTLYTTPVVYLYMEKLRARFSRQKALPPLAY.

Helical transmembrane passes span 16–36, 333–353, 360–380, 387–407, 435–455, 459–479, 528–548, 853–873, 897–917, 953–973, and 984–1004; these read LLAL…PVAP, EVEQ…FLFL, LIPA…IYLC, LSLM…IVVL, VFSI…MGGI, LFHE…LIAL, WVLL…ISIP, LLLI…LYES, LFNA…IGLV, PILM…FSYG, and ITIV…TPVV.

This sequence belongs to the resistance-nodulation-cell division (RND) (TC 2.A.6) family. MdtC subfamily. In terms of assembly, part of a tripartite efflux system composed of MdtA, MdtB and MdtC. MdtC forms a heteromultimer with MdtB.

The protein localises to the cell inner membrane. The chain is Multidrug resistance protein MdtC from Edwardsiella ictaluri (strain 93-146).